A 1370-amino-acid polypeptide reads, in one-letter code: DNA-directed RNA polymerase subunit beta (1370 aa).

It belongs to the RNA polymerase beta chain family. As to quaternary structure, the RNAP catalytic core consists of 2 alpha, 1 beta, 1 beta' and 1 omega subunit. When a sigma factor is associated with the core the holoenzyme is formed, which can initiate transcription.

It catalyses the reaction RNA(n) + a ribonucleoside 5'-triphosphate = RNA(n+1) + diphosphate. Functionally, DNA-dependent RNA polymerase catalyzes the transcription of DNA into RNA using the four ribonucleoside triphosphates as substrates. The sequence is that of DNA-directed RNA polymerase subunit beta from Albidiferax ferrireducens (strain ATCC BAA-621 / DSM 15236 / T118) (Rhodoferax ferrireducens).